Consider the following 178-residue polypeptide: Large ribosomal subunit protein uL6 (178 aa).

Belongs to the universal ribosomal protein uL6 family. Part of the 50S ribosomal subunit.

This protein binds to the 23S rRNA, and is important in its secondary structure. It is located near the subunit interface in the base of the L7/L12 stalk, and near the tRNA binding site of the peptidyltransferase center. This chain is Large ribosomal subunit protein uL6, found in Tropheryma whipplei (strain TW08/27) (Whipple's bacillus).